The chain runs to 257 residues: Ribosomal large subunit pseudouridine synthase B (257 aa).

The 61-residue stretch at 3–63 (AKIQKILSDL…KKKIIVKRNK (61 aa)) folds into the S4 RNA-binding domain. Asp-109 functions as the Nucleophile in the catalytic mechanism.

It belongs to the pseudouridine synthase RsuA family.

The enzyme catalyses uridine(2605) in 23S rRNA = pseudouridine(2605) in 23S rRNA. Responsible for synthesis of pseudouridine from uracil-2605 in 23S ribosomal RNA. The chain is Ribosomal large subunit pseudouridine synthase B (rluB) from Buchnera aphidicola subsp. Schizaphis graminum (strain Sg).